The chain runs to 1485 residues: Chromosome partition protein MukB (1485 aa).

Residue 34–41 (GGNGAGKS) participates in ATP binding. Coiled coils occupy residues 337-480 (LNLV…QAYQ) and 509-605 (QHLA…PVWL). Positions 666-783 (PSGAEDARLI…EVPLFGRAAR (118 aa)) are flexible hinge. Coiled coils occupy residues 835–915 (EAEI…IQQH) and 977–1116 (GMLT…AKAG).

This sequence belongs to the SMC family. MukB subfamily. Homodimerization via its hinge domain. Binds to DNA via its C-terminal region. Interacts, and probably forms a ternary complex, with MukE and MukF via its C-terminal region. The complex formation is stimulated by calcium or magnesium. Interacts with tubulin-related protein FtsZ.

Its subcellular location is the cytoplasm. It is found in the nucleoid. Plays a central role in chromosome condensation, segregation and cell cycle progression. Functions as a homodimer, which is essential for chromosome partition. Involved in negative DNA supercoiling in vivo, and by this means organize and compact chromosomes. May achieve or facilitate chromosome segregation by condensation DNA from both sides of a centrally located replisome during cell division. The protein is Chromosome partition protein MukB of Yersinia pseudotuberculosis serotype O:3 (strain YPIII).